A 475-amino-acid polypeptide reads, in one-letter code: Adenylyl cyclase-associated protein 1 (475 aa).

A2 carries the post-translational modification N-acetylalanine. The residue at position 31 (Y31) is a Phosphotyrosine. At S34 the chain carries Phosphoserine. K81 is subject to N6-acetyllysine. Disordered regions lie at residues 216–255 (ELSG…ASRS) and 278–318 (MKTH…TKKE). The segment covering 218 to 228 (SGLPSGPSAGS) has biased composition (low complexity). Pro residues predominate over residues 229 to 242 (GPPPPPPGPPPPPV). The span at 243–255 (STSSGSDESASRS) shows a compositional bias: low complexity. Position 287 is an N6-methyllysine (K287). 3 positions are modified to phosphoserine: S290, S295, and S301. The segment covering 300-312 (FSAPKPQTSPSPK) has biased composition (pro residues). Residue T307 is modified to Phosphothreonine. Phosphoserine is present on residues S308 and S310. Residues 313 to 453 (PATKKEPAVL…EGGDFNEFPV (141 aa)) form the C-CAP/cofactor C-like domain. Residue K348 forms a Glycyl lysine isopeptide (Lys-Gly) (interchain with G-Cter in SUMO1) linkage.

The protein belongs to the CAP family. In terms of assembly, homodimer. Binds actin monomers.

It localises to the cell membrane. Its function is as follows. Directly regulates filament dynamics and has been implicated in a number of complex developmental and morphological processes, including mRNA localization and the establishment of cell polarity. The polypeptide is Adenylyl cyclase-associated protein 1 (CAP1) (Macaca fascicularis (Crab-eating macaque)).